Reading from the N-terminus, the 68-residue chain is Gallinacin-10 (68 aa).

Positions 1–19 are cleaved as a signal peptide; that stretch reads MKILCLLFAVLLFLFQAAP. The propeptide occupies 20 to 25; sequence GSADPL. 3 cysteine pairs are disulfide-bonded: Cys-32–Cys-61, Cys-39–Cys-54, and Cys-44–Cys-62.

The protein belongs to the beta-defensin family. Strong expression in the testis, liver, gall bladder and kidney. Also expressed in the ovary and male and female reproductive tracts. Expressed in the ovarian stroma and the theca and granulosa layers of the ovarian follicle.

Its subcellular location is the secreted. It localises to the cytoplasmic granule. Functionally, has bactericidal activity. The polypeptide is Gallinacin-10 (GAL10) (Gallus gallus (Chicken)).